Reading from the N-terminus, the 558-residue chain is Dihydroxy-acid dehydratase (558 aa).

A [2Fe-2S] cluster-binding site is contributed by C50. Residue D82 coordinates Mg(2+). C123 contacts [2Fe-2S] cluster. 2 residues coordinate Mg(2+): D124 and K125. Position 125 is an N6-carboxylysine (K125). C195 provides a ligand contact to [2Fe-2S] cluster. Mg(2+) is bound at residue E447. S472 functions as the Proton acceptor in the catalytic mechanism.

It belongs to the IlvD/Edd family. Homodimer. [2Fe-2S] cluster is required as a cofactor. The cofactor is Mg(2+).

The catalysed reaction is (2R)-2,3-dihydroxy-3-methylbutanoate = 3-methyl-2-oxobutanoate + H2O. It carries out the reaction (2R,3R)-2,3-dihydroxy-3-methylpentanoate = (S)-3-methyl-2-oxopentanoate + H2O. The protein operates within amino-acid biosynthesis; L-isoleucine biosynthesis; L-isoleucine from 2-oxobutanoate: step 3/4. It functions in the pathway amino-acid biosynthesis; L-valine biosynthesis; L-valine from pyruvate: step 3/4. Functions in the biosynthesis of branched-chain amino acids. Catalyzes the dehydration of (2R,3R)-2,3-dihydroxy-3-methylpentanoate (2,3-dihydroxy-3-methylvalerate) into 2-oxo-3-methylpentanoate (2-oxo-3-methylvalerate) and of (2R)-2,3-dihydroxy-3-methylbutanoate (2,3-dihydroxyisovalerate) into 2-oxo-3-methylbutanoate (2-oxoisovalerate), the penultimate precursor to L-isoleucine and L-valine, respectively. The protein is Dihydroxy-acid dehydratase of Saccharolobus islandicus (strain Y.N.15.51 / Yellowstone #2) (Sulfolobus islandicus).